The sequence spans 273 residues: Undecaprenyl-diphosphatase (273 aa).

7 helical membrane passes run 6 to 26 (SLLI…LPVS), 45 to 65 (AKTF…VMFW), 90 to 110 (LTLI…LLFH), 116 to 136 (LFNP…LIAA), 190 to 210 (YAAS…ATAL), 222 to 242 (GDIP…LIAI), and 252 to 272 (ISFI…YVVF).

This sequence belongs to the UppP family.

Its subcellular location is the cell inner membrane. The enzyme catalyses di-trans,octa-cis-undecaprenyl diphosphate + H2O = di-trans,octa-cis-undecaprenyl phosphate + phosphate + H(+). Catalyzes the dephosphorylation of undecaprenyl diphosphate (UPP). Confers resistance to bacitracin. This chain is Undecaprenyl-diphosphatase, found in Escherichia coli O157:H7.